The sequence spans 62 residues: Sperm protamine P1 (62 aa).

The disordered stretch occupies residues 1 to 62 (MARYRRHSRS…RYSRRGRRRY (62 aa)).

The protein belongs to the protamine P1 family. Testis.

The protein localises to the nucleus. It localises to the chromosome. Functionally, protamines substitute for histones in the chromatin of sperm during the haploid phase of spermatogenesis. They compact sperm DNA into a highly condensed, stable and inactive complex. The protein is Sperm protamine P1 (PRM1) of Antechinomys laniger (Eastern jerboa marsupial).